A 593-amino-acid chain; its full sequence is MHLYRSHTCGALSRGDVGQTVRLSGWVHRKRDHGGVLFVDLRDHYGMTQIVADADSPALPILEALRVESVVTIDGEVKARSEGTVNANLSTGEIEVFARVATVLSAAEELPMPVAGEQEYPEDIRLRYRFLDLRRETLHANIVKRTKVISDMRRRMEGAGFTEYSTPILTASSPEGARDFLVPSRIHPGKFYALPQAPQQYKQLLMVAGFDRYFQIAPCFRDEDPRADRLPGEFYQLDLEMSFVTQEEVWETMEPVIGGVFEAFADGRKVTPIGSFPRIPYAEAMLKYGSDKPDLRNPIIISDVSEEFAQSGFGLFEKIVGTGGVVRLIPAPNTADKSRKFFDEMNDWARAEGHAGLGYVTRKQGEFGGPIAKNHGADKMAALFDRLGLGPDDGCFFAAGKAEQAAKLAGAARTRVADQLGLIDKDRFELCWIVDFPFYEWDEENKKVEFSHNPFSMPQGGLDALNTQDPLTINAFQYDLVCNGFEIASGSIRNQSPETMVKAFEIVGLSKADVEERFGGLYRAFQYGAPPHGGMAAGVDRIVMLICGAQNLREITLFPMNQRAEDLLMGAPSPAALKQLRELNIRVVEQTKG.

An L-aspartate-binding site is contributed by Glu175. Residues 199-202 (QQYK) form an aspartate region. Residues Arg221 and His452 each coordinate L-aspartate. Position 221-223 (221-223 (RDE)) interacts with ATP. Residue Glu486 participates in ATP binding. Arg493 serves as a coordination point for L-aspartate. 538–541 (GVDR) lines the ATP pocket.

It belongs to the class-II aminoacyl-tRNA synthetase family. Type 1 subfamily. As to quaternary structure, homodimer.

It localises to the cytoplasm. It carries out the reaction tRNA(Asx) + L-aspartate + ATP = L-aspartyl-tRNA(Asx) + AMP + diphosphate. Functionally, aspartyl-tRNA synthetase with relaxed tRNA specificity since it is able to aspartylate not only its cognate tRNA(Asp) but also tRNA(Asn). Reaction proceeds in two steps: L-aspartate is first activated by ATP to form Asp-AMP and then transferred to the acceptor end of tRNA(Asp/Asn). In Novosphingobium aromaticivorans (strain ATCC 700278 / DSM 12444 / CCUG 56034 / CIP 105152 / NBRC 16084 / F199), this protein is Aspartate--tRNA(Asp/Asn) ligase.